A 346-amino-acid polypeptide reads, in one-letter code: [LysW]-lysine/[LysW]-ornithine hydrolase (346 aa).

His68 serves as a coordination point for Zn(2+). Asp70 is a catalytic residue. Asp92 provides a ligand contact to Zn(2+). The active-site Proton acceptor is Glu122. Residues Glu123, Glu146, and His317 each contribute to the Zn(2+) site.

It belongs to the peptidase M20A family. LysK subfamily. Zn(2+) serves as cofactor. Co(2+) is required as a cofactor.

The protein resides in the cytoplasm. It carries out the reaction [amino-group carrier protein]-C-terminal-gamma-(L-lysyl)-L-glutamate + H2O = [amino-group carrier protein]-C-terminal-L-glutamate + L-lysine. The enzyme catalyses [amino-group carrier protein]-C-terminal-gamma-(L-ornithyl)-L-glutamate + H2O = [amino-group carrier protein]-C-terminal-L-glutamate + L-ornithine. Its pathway is amino-acid biosynthesis; L-lysine biosynthesis via AAA pathway; L-lysine from L-alpha-aminoadipate (Thermus route): step 5/5. The protein operates within amino-acid biosynthesis; L-arginine biosynthesis. Functionally, catalyzes the release of L-lysine from [LysW]-gamma-L-lysine and the release of L-ornithine from [LysW]-L-ornithine. The chain is [LysW]-lysine/[LysW]-ornithine hydrolase from Saccharolobus islandicus (strain Y.N.15.51 / Yellowstone #2) (Sulfolobus islandicus).